Here is a 151-residue protein sequence, read N- to C-terminus: MGRMHAPGKGISQSALPYRRSVPTWLKLTADDVKEQIFKLGKKGLTPSQIGVMLRDSHGVAQVRFVTGKKILRIMKAMGLAPDLPEDLYYLIKKAVAMRKHLERNRKDKDSKFRLILVESRIHRLARYYKTKSVLPPNWKYESSTASALVA.

Belongs to the universal ribosomal protein uS15 family.

This is Small ribosomal subunit protein uS15 (RpS13) from Spodoptera frugiperda (Fall armyworm).